A 196-amino-acid polypeptide reads, in one-letter code: MSTSGPITEFPAPGLRDPFRYITGHDAEGNAVFVQTDNGDHRAVMLGGAAAQNIIYSAGSNPIELTGNVDLEFAKNRPSLHIPNGVCVRMIDFAPGCKSNMHRALCMGIGTVCEGEVELTLGSGEKRILRPGDVSINRGAMHQWRNTSDEKPARMLYTLLDIKPLIVNGKQLDFDMGYLMKEYAEYDEGEGDKKAE.

Residues 92–156 (DFAPGCKSNM…TSDEKPARML (65 aa)) enclose the Cupin type-2 domain.

It belongs to the virC family.

Its function is as follows. Cupin-domain-containing oxidoreductase; part of the gene cluster that mediates the biosynthesis of sordarial, a salicylic aldehyde structurally related to the phytotoxin pyriculol. The most interesting aspect of this pathway is formation of an aromatic product from the highly reducing polyketide synthase srdA. SrdA synthesizes a reduced polyketide chain from one molecule of acetyl-CoA and five molecules of malonyl-CoA. The polyketide chain is then reductively released as an aldehyde. The oxidoreductases srdC, srdD and srdE then oxidize one of the hydroxy groups to facilitate the intramolecular aldol condensation, followed by dehydration to yield a salicylic aldehyde. This aldehyde can undergo facile reduction by endogenous reductases to yield the alcohol 1-hydroxy-2-hydroxymethyl-3-pent-1,3-dienylbenzene. The flavin-dependent srdI counteract against the propensity of the aldehydes to be reduced under physiological conditions and is responsible for reoxidizing 1-hydroxy-2-hydroxymethyl-3-pent-1,3-dienylbenzene back to the salicylic aldehyde. This salicylic aldehyde is then selectively epoxidized by the cupin-domain-containing oxidoreductase srdB to yield the epoxide, which can be hydrolyzed stereoselectively by the hydrolase srdG to give the final product sordarial. The chain is Cupin-domain-containing oxidoreductase srdB from Neurospora crassa (strain ATCC 24698 / 74-OR23-1A / CBS 708.71 / DSM 1257 / FGSC 987).